Reading from the N-terminus, the 259-residue chain is Glucose-1-phosphate thymidylyltransferase (259 aa).

This sequence belongs to the inositol monophosphatase superfamily.

It carries out the reaction dTTP + alpha-D-glucose 1-phosphate + H(+) = dTDP-alpha-D-glucose + diphosphate. Its pathway is antibiotic biosynthesis; streptomycin biosynthesis. The sequence is that of Glucose-1-phosphate thymidylyltransferase (strO) from Streptomyces griseus.